Reading from the N-terminus, the 140-residue chain is Large ribosomal subunit protein bL17 (140 aa).

This sequence belongs to the bacterial ribosomal protein bL17 family. As to quaternary structure, part of the 50S ribosomal subunit. Contacts protein L32.

The chain is Large ribosomal subunit protein bL17 from Roseobacter denitrificans (strain ATCC 33942 / OCh 114) (Erythrobacter sp. (strain OCh 114)).